Here is a 292-residue protein sequence, read N- to C-terminus: Nucleophosmin (292 aa).

Position 1 is an N-acetylmethionine (Met1). Residues Met1–Val117 are necessary for interaction with APEX1. Residues Met1–Thr185 form a required for interaction with SENP3 region. Ser4 is modified (phosphoserine; by PLK1 and PLK2). Residue Ser10 is modified to Phosphoserine. A Glycyl lysine isopeptide (Lys-Gly) (interchain with G-Cter in SUMO2) cross-link involves residue Lys27. The residue at position 32 (Lys32) is an N6-acetyllysine; alternate. A Glycyl lysine isopeptide (Lys-Gly) (interchain with G-Cter in SUMO1); alternate cross-link involves residue Lys32. A Glycyl lysine isopeptide (Lys-Gly) (interchain with G-Cter in SUMO2); alternate cross-link involves residue Lys32. Position 43 is a phosphoserine (Ser43). Phosphotyrosine is present on Tyr67. Phosphoserine is present on Ser70. 2 positions are modified to phosphothreonine: Thr75 and Thr95. 2 positions are modified to phosphoserine: Ser125 and Ser139. Positions Met138–Lys248 are disordered. Residue Lys141 forms a Glycyl lysine isopeptide (Lys-Gly) (interchain with G-Cter in SUMO2) linkage. Lys150 bears the N6-acetyllysine; alternate mark. Lys150 participates in a covalent cross-link: Glycyl lysine isopeptide (Lys-Gly) (interchain with G-Cter in SUMO2); alternate. The Nuclear localization signal motif lies at Pro152 to Lys157. Lys154 carries the post-translational modification N6-acetyllysine. Positions Asp159–Glu186 are enriched in acidic residues. Positions Glu186–Lys214 are interaction with NOP2. Basic and acidic residues predominate over residues Glu187 to Pro199. The Nuclear localization signal signature appears at Pro190 to Arg196. The residue at position 198 (Thr198) is a Phosphothreonine; by CDK1 and CDK2. Positions Lys201–Gly210 are enriched in polar residues. Ser206 carries the post-translational modification ADP-ribosylserine. Lys211 is subject to N6-acetyllysine. Lys214 is covalently cross-linked (Glycyl lysine isopeptide (Lys-Gly) (interchain with G-Cter in SUMO2)). Thr217 is subject to Phosphothreonine; by CDK1. A compositionally biased stretch (basic and acidic residues) spans Lys221–Pro233. Residue Ser225 is modified to Phosphoserine. Lys227 carries the N6-acetyllysine modification. Lys228 is modified (N6-acetyllysine; alternate). Lys228 participates in a covalent cross-link: Glycyl lysine isopeptide (Lys-Gly) (interchain with G-Cter in SUMO); alternate. Thr232 and Thr235 each carry phosphothreonine; by CDK1. Phosphoserine occurs at positions 240 and 241. Residues Ser241 to Leu292 form a required for nucleolar localization region. Residue Lys246 forms a Glycyl lysine isopeptide (Lys-Gly) (interchain with G-Cter in SUMO1); alternate linkage. Residues Lys246 and Lys248 each participate in a glycyl lysine isopeptide (Lys-Gly) (interchain with G-Cter in SUMO2); alternate cross-link. Lys248 is subject to N6-acetyllysine; alternate. Phosphoserine is present on Ser252. At Lys255 the chain carries N6-acetyllysine; alternate. Residue Lys255 forms a Glycyl lysine isopeptide (Lys-Gly) (interchain with G-Cter in SUMO1); alternate linkage. Lys255 participates in a covalent cross-link: Glycyl lysine isopeptide (Lys-Gly) (interchain with G-Cter in SUMO2); alternate. Ser258 is subject to Phosphoserine. Residues Lys261, Lys265, and Lys271 each participate in a glycyl lysine isopeptide (Lys-Gly) (interchain with G-Cter in SUMO2); alternate cross-link. A Glycyl lysine isopeptide (Lys-Gly) (interchain with G-Cter in SUMO); alternate cross-link involves residue Lys261. Residues Lys265 and Lys271 each carry the N6-acetyllysine; alternate modification. Lys265 is covalently cross-linked (Glycyl lysine isopeptide (Lys-Gly) (interchain with G-Cter in SUMO1); alternate). An N6-succinyllysine; alternate modification is found at Lys265. Thr277 is modified (phosphothreonine). Lys290 carries the post-translational modification N6-acetyllysine.

It belongs to the nucleoplasmin family. In terms of assembly, decamer formed by two pentameric rings associated in a head-to-head fashion. Disulfide-linked dimers under certain conditions. Interacts with NSUN2 and SENP3. The SWAP complex consists of NPM1, NCL, PARP1 and SWAP70. Interacts with the methylated form of RPS10. Interacts (via N-terminal domain) with APEX1; the interaction is RNA-dependent and decreases peroxide-damaged cells. Interacts with NEK2. Interacts with ROCK2 and BRCA2. Interacts with RPGR. Interacts with CENPW. Interacts with EIF2AK2/PKR. Interacts with DDX31; this interaction prevents interaction between NPM1 and HDM2. Interacts with MYC; competitive with NOP53. Interacts with NOP53; the interaction is direct and competitive with MYC. Interacts with LRRC34. Interacts with RRP1B. Interacts with NPM3. Interacts with ALKBH2. Interacts with TTF1 (via C-terminal region). Interacts with NOP2. Interacts with ARID3C (via REKLES DOMAIN); the interaction mediates ARID3C nuclear shuttling. In terms of processing, acetylated at C-terminal lysine residues, thereby increasing affinity to histones. ADP-ribosylated. Post-translationally, phosphorylated at Ser-4 by PLK1 and PLK2. Phosphorylation at Ser-4 by PLK2 in S phase is required for centriole duplication and is sufficient to trigger centriole replication. Phosphorylation at Ser-4 by PLK1 takes place during mitosis. Phosphorylated by CDK2 at Ser-125 and Thr-198. Phosphorylation at Thr-198 may trigger initiation of centrosome duplication. Phosphorylated by CDK1 at Thr-198, Thr-217, Thr-232 and Thr-235 during cell mitosis. When these four sites are phosphorated, RNA-binding activity seem to be abolished. May be phosphorylated at Ser-70 by NEK2. The Thr-198 phosphorylated form has higher affinity for ROCK2. In terms of processing, sumoylated by ARF. Ubiquitinated. Ubiquitination leads to proteasomal degradation. Deubiquitinated by USP36. Expressed in B-cells that have been induced to switch to various Ig isotypes.

The protein localises to the nucleus. The protein resides in the nucleolus. It localises to the nucleoplasm. Its subcellular location is the cytoplasm. It is found in the cytoskeleton. The protein localises to the microtubule organizing center. The protein resides in the centrosome. Its function is as follows. Involved in diverse cellular processes such as ribosome biogenesis, centrosome duplication, protein chaperoning, histone assembly, cell proliferation, and regulation of tumor suppressors p53/TP53 and ARF. Binds ribosome presumably to drive ribosome nuclear export. Associated with nucleolar ribonucleoprotein structures and bind single-stranded nucleic acids. Acts as a chaperonin for the core histones H3, H2B and H4. Stimulates APEX1 endonuclease activity on apurinic/apyrimidinic (AP) double-stranded DNA but inhibits APEX1 endonuclease activity on AP single-stranded RNA. May exert a control of APEX1 endonuclease activity within nucleoli devoted to repair AP on rDNA and the removal of oxidized rRNA molecules. In concert with BRCA2, regulates centrosome duplication. Regulates centriole duplication: phosphorylation by PLK2 is able to trigger centriole replication. Negatively regulates the activation of EIF2AK2/PKR and suppresses apoptosis through inhibition of EIF2AK2/PKR autophosphorylation. Antagonizes the inhibitory effect of ATF5 on cell proliferation and relieves ATF5-induced G2/M blockade. In complex with MYC enhances the transcription of MYC target genes. May act as chaperonin or cotransporter in the nucleolar localization of transcription termination factor TTF1. In Mus musculus (Mouse), this protein is Nucleophosmin (Npm1).